Here is a 367-residue protein sequence, read N- to C-terminus: Peptide chain release factor 2 (367 aa).

Gln249 carries the N5-methylglutamine modification.

This sequence belongs to the prokaryotic/mitochondrial release factor family. In terms of processing, methylated by PrmC. Methylation increases the termination efficiency of RF2.

It is found in the cytoplasm. Peptide chain release factor 2 directs the termination of translation in response to the peptide chain termination codons UGA and UAA. The chain is Peptide chain release factor 2 from Thermotoga petrophila (strain ATCC BAA-488 / DSM 13995 / JCM 10881 / RKU-1).